The sequence spans 1216 residues: SPOC domain-containing protein 1 (1216 aa).

Disordered stretches follow at residues 1-74 (MSQA…RAAG), 166-216 (EARD…GAHS), 236-325 (NLLS…PPQS), 348-462 (RTGS…PRLE), and 511-601 (SSPS…QQEK). Over residues 36–50 (PGLSPDGPGASSGPG) the composition is skewed to low complexity. Positions 177–190 (CDRRSPTLSKEEPP) are enriched in basic and acidic residues. Residues 204 to 213 (RVRKKWRRQG) are compositionally biased toward basic residues. Residues 266–278 (SGPGEPGGSGAGC) are compositionally biased toward gly residues. Low complexity predominate over residues 314 to 325 (SLSSAAQAPPQS). Over residues 436–452 (RGTDRSSDNSHQDRPEE) the composition is skewed to basic and acidic residues. Residues 581–592 (EAEEDSLPEQPE) are compositionally biased toward acidic residues. The TFIIS central domain maps to 608–728 (VRGTVVRSMQ…IIEQQQKEPC (121 aa)). The segment at 823 to 850 (QTPMPAPEMPKTRELSPTEPQDRVPPSG) is disordered. The span at 832–844 (PKTRELSPTEPQD) shows a compositional bias: basic and acidic residues. One can recognise an SPOC domain in the interval 867-970 (WEGVLDMFSI…VEHMGMVLLP (104 aa)). Positions 1046-1055 (RYYQPDDRRP) are enriched in basic and acidic residues. Disordered stretches follow at residues 1046 to 1140 (RYYQ…QHFH) and 1176 to 1216 (PRPL…PRKA).

Interacts with DNMT3A, DNMT3C and DNMT3L. Interacts with C19orf84. Interacts with SPIN1; promoting recruitment to transposons marked with histone H3 trimethylated at both 'Lys-4' and 'Lys-9' (H3K4me3K9me3).

The protein resides in the nucleus. The protein localises to the chromosome. In terms of biological role, protein adapter that acts as an essential executor of PIWIL4-piRNA pathway directed transposon DNA methylation and silencing in the male embryonic germ cells. Recruited to young transposons, which are specifically marked with histone H3 trimethylated at both 'Lys-4' and 'Lys-9' (H3K4me3K9me3), via its association with SPIN1 chromatin reader, and associates with the de novo DNA methylation machinery and repressive chromatin remodeling complexes. Following this, PIWIL4 engages with nascent transposable element transcript to direct piRNA-directed DNA methylation. Not required for piRNA biosynthesis. The polypeptide is SPOC domain-containing protein 1 (Homo sapiens (Human)).